Consider the following 155-residue polypeptide: Ribosomal RNA large subunit methyltransferase H (155 aa).

Residues Leu-72, Gly-103, and 122 to 127 (LSDLTL) contribute to the S-adenosyl-L-methionine site.

It belongs to the RNA methyltransferase RlmH family. In terms of assembly, homodimer.

Its subcellular location is the cytoplasm. The enzyme catalyses pseudouridine(1915) in 23S rRNA + S-adenosyl-L-methionine = N(3)-methylpseudouridine(1915) in 23S rRNA + S-adenosyl-L-homocysteine + H(+). Functionally, specifically methylates the pseudouridine at position 1915 (m3Psi1915) in 23S rRNA. This chain is Ribosomal RNA large subunit methyltransferase H, found in Variovorax paradoxus (strain S110).